Here is a 111-residue protein sequence, read N- to C-terminus: Probable 4-amino-4-deoxy-L-arabinose-phosphoundecaprenol flippase subunit ArnE (111 aa).

Over 1-37 (MIWLTLVFASLLSVAGQLCQKQATCFVAINKRRKHIA) the chain is Cytoplasmic. Residues 38–58 (LWLGLALACLGLAMVLWLLVL) traverse the membrane as a helical segment. Positions 40 to 109 (LGLALACLGL…IIGGIVILGS (70 aa)) constitute an EamA domain. At 59–60 (QN) the chain is on the periplasmic side. Residues 61 to 81 (VPVGIAYPMLSLNFVWVTLAA) form a helical membrane-spanning segment. Over 82 to 87 (VKLWHE) the chain is Cytoplasmic. A helical membrane pass occupies residues 88-108 (PVSPRHWCGVAFIIGGIVILG). The Periplasmic portion of the chain corresponds to 109–111 (STV).

This sequence belongs to the ArnE family. Heterodimer of ArnE and ArnF.

It localises to the cell inner membrane. It participates in bacterial outer membrane biogenesis; lipopolysaccharide biosynthesis. Functionally, translocates 4-amino-4-deoxy-L-arabinose-phosphoundecaprenol (alpha-L-Ara4N-phosphoundecaprenol) from the cytoplasmic to the periplasmic side of the inner membrane. In Escherichia coli (strain 55989 / EAEC), this protein is Probable 4-amino-4-deoxy-L-arabinose-phosphoundecaprenol flippase subunit ArnE.